A 340-amino-acid chain; its full sequence is Erythroferrone (340 aa).

The signal sequence occupies residues 1-24 (MASTRRPVGARTLLACASLLAAMG). 3 disordered regions span residues 30-63 (SAEPVGTHARPQPPGAELPAPPANSPPEPTIAHA), 79-112 (SDKGINSKRRSKARRLKLGLPGPPGPPGPQGPPG), and 141-161 (HCTRDLTTPASGSPSRVPAAQ). The span at 40-58 (PQPPGAELPAPPANSPPEP) shows a compositional bias: pro residues. The segment covering 84–95 (NSKRRSKARRLK) has biased composition (basic residues). Hydroxyproline is present on residues Pro99, Pro101, Pro102, Pro104, Pro105, and Pro107. The segment covering 99 to 112 (PGPPGPPGPQGPPG) has biased composition (pro residues). Residues 145–154 (DLTTPASGSP) show a composition bias toward polar residues. Positions 185–340 (APRVEAAFHC…SHFSAILLGL (156 aa)) constitute a C1q domain. 4 N-linked (GlcNAc...) asparagine glycosylation sites follow: Asn229, Asn281, Asn292, and Asn319.

The protein belongs to the adipolin/erythroferrone family. As to quaternary structure, homodimer; disulfide-linked. Forms trimer, hexamers and higher molecular weight oligomers. May form heteromeric complexes with C1QTNF2 and C1QTNF12 and, to a lesser extent, with C1QTNF5 and C1QTNF10. Interacts with BMP5 and BMP7; the interaction inhibits BMP-induced transcription of HAMP. Interacts with BMP6; the interaction inhibits BMP-induced transcription of HAMP. Interacts with BMP2. Interacts with heterodimers composed of BMP2 and BMP6 in vitro, the interaction inhibits the heterodimer binding to its receptor BMPR1A /ALK3 and thereby suppresses expression of HAMP. N-glycosylated; required for secretion of the mature protein. Expressed in the soleus muscle in the leg (at protein level). Found in blood (at protein level). Weakly expressed in the heart (at protein level). Predominantly expressed in skeletal muscle and, at much lower levels, in other tissues, including lung, eye, smooth muscle, brain and kidney. Within skeletal muscles, higher expression levels in soleus as compared with plantaris. Expressed in osteoblasts, mature osteoclasts and erythroblasts. When fasting, females tend to have higher circulating levels than males. Obese mice tend to have lower expression and circulating levels as compared to lean animals. Following EPO treatment, only expressed in bone marrow and spleen.

The protein localises to the secreted. In terms of biological role, iron-regulatory hormone that acts as an erythroid regulator after hemorrhage: produced by erythroblasts following blood loss and mediates suppression of hepcidin (HAMP) expression in the liver, thereby promoting increased iron absorption and mobilization from stores. Promotes lipid uptake into adipocytes and hepatocytes via transcriptional up-regulation of genes involved in fatty acid uptake. Inhibits apoptosis and inflammatory response in cardiomyocytes via promotion of sphingosine-1-phosphate (S1P) and cAMP-dependent activation of AKT signaling. Inhibits autophagy induced by nutrient deficiency in hepatocytes via promoting the phosphorylation of IRS1, AKT, and MTOR, and thereby subsequent activation of the AKT-MTOR signaling pathway. Negatively regulates the differentiation of osteoblasts, potentially via sequestering BMP2, and thereby inhibits the activation of SMAD signaling. The reduction in BMP2 signaling in osteoblasts also results in an increase in expression of the osteoclastogenesis-promoting factors TNFSF11/RANKL and SOST, thereby indirectly promotes bone resorption. The chain is Erythroferrone from Mus musculus (Mouse).